A 422-amino-acid polypeptide reads, in one-letter code: MKSWSTPAPPTVPSRPDRLRLHDTATGRTRHPGNDGRRASLYVCGITPYDATHLGHASTYVAFDLLHRYWRAAGLEVAYVQNVTDVDDPLLERAEATGVDWRALAEEQTDLFRADMAALEVLAPDHYVGATEAVGLVVDAVETMLAAGRAYRVPGGDGEPEGDVYFDVRSAQSATDWRLGQVSAMDLDEMAAVFPERGGDPDRPGKRDPLDPLLWRVHREGEPAWDGRSLGSGRPGWHIECSVISRAHLPAPFTVQGGGSDLRFPHHEFSAAHATAVDGLPLAHTYAHTGMVALDGEKMSKSLGNLELVSRLRARGVEPVAVRAAILAHHYRSDWEWSEQVLTDAQARVTRWRAALDGPHAAAGVAVLDAVHAALSDDLDAPRALEALDAWAAGTLPGLVETAADPVPVVDVVAALLGLRLR.

A disordered region spans residues methionine 1–asparagine 34. The span at arginine 15–alanine 25 shows a compositional bias: basic and acidic residues. Cysteine 44 provides a ligand contact to Zn(2+). L-cysteinyl-5'-AMP is bound by residues cysteine 44–threonine 47, threonine 59, and asparagine 82–threonine 84. The 'HIGH' region signature appears at isoleucine 46–histidine 56. The short motif at glutamate 196–proline 201 is the 'ERGGDP' region element. Residue tryptophan 237 coordinates L-cysteinyl-5'-AMP. Residue cysteine 241 participates in Zn(2+) binding. Residue glycine 259–aspartate 261 coordinates L-cysteinyl-5'-AMP. Histidine 266 is a binding site for Zn(2+). L-cysteinyl-5'-AMP is bound at residue valine 292. A 'KMSKS' region motif is present at residues lysine 298–serine 302.

The protein belongs to the class-I aminoacyl-tRNA synthetase family. MshC subfamily. Monomer. It depends on Zn(2+) as a cofactor.

The catalysed reaction is 1D-myo-inositol 2-amino-2-deoxy-alpha-D-glucopyranoside + L-cysteine + ATP = 1D-myo-inositol 2-(L-cysteinylamino)-2-deoxy-alpha-D-glucopyranoside + AMP + diphosphate + H(+). Catalyzes the ATP-dependent condensation of GlcN-Ins and L-cysteine to form L-Cys-GlcN-Ins. This is L-cysteine:1D-myo-inositol 2-amino-2-deoxy-alpha-D-glucopyranoside ligase from Micrococcus luteus (strain ATCC 4698 / DSM 20030 / JCM 1464 / CCM 169 / CCUG 5858 / IAM 1056 / NBRC 3333 / NCIMB 9278 / NCTC 2665 / VKM Ac-2230) (Micrococcus lysodeikticus).